The primary structure comprises 577 residues: Adenine deaminase (577 aa).

It belongs to the metallo-dependent hydrolases superfamily. Adenine deaminase family. Mn(2+) serves as cofactor.

The catalysed reaction is adenine + H2O + H(+) = hypoxanthine + NH4(+). The sequence is that of Adenine deaminase from Kosmotoga olearia (strain ATCC BAA-1733 / DSM 21960 / TBF 19.5.1).